The primary structure comprises 505 residues: N-succinylglutamate 5-semialdehyde dehydrogenase (505 aa).

234–239 is a binding site for NAD(+); the sequence is GSAHTG. Catalysis depends on residues glutamate 257 and cysteine 291.

This sequence belongs to the aldehyde dehydrogenase family. AstD subfamily.

It catalyses the reaction N-succinyl-L-glutamate 5-semialdehyde + NAD(+) + H2O = N-succinyl-L-glutamate + NADH + 2 H(+). The protein operates within amino-acid degradation; L-arginine degradation via AST pathway; L-glutamate and succinate from L-arginine: step 4/5. In terms of biological role, catalyzes the NAD-dependent reduction of succinylglutamate semialdehyde into succinylglutamate. The protein is N-succinylglutamate 5-semialdehyde dehydrogenase of Yersinia pestis (strain Pestoides F).